The primary structure comprises 856 residues: Translation initiation factor IF-2 (856 aa).

In terms of domain architecture, tr-type G spans P356 to K526. The tract at residues G365 to T372 is G1. G365–T372 lines the GTP pocket. A G2 region spans residues G390–H394. The G3 stretch occupies residues D412–G415. GTP contacts are provided by residues D412–H416 and N466–D469. Residues N466 to D469 are G4. The G5 stretch occupies residues S502–K504.

This sequence belongs to the TRAFAC class translation factor GTPase superfamily. Classic translation factor GTPase family. IF-2 subfamily.

The protein resides in the cytoplasm. In terms of biological role, one of the essential components for the initiation of protein synthesis. Protects formylmethionyl-tRNA from spontaneous hydrolysis and promotes its binding to the 30S ribosomal subunits. Also involved in the hydrolysis of GTP during the formation of the 70S ribosomal complex. This is Translation initiation factor IF-2 from Ehrlichia ruminantium (strain Gardel).